Reading from the N-terminus, the 265-residue chain is Keratinocyte-associated transmembrane protein 2 (265 aa).

An N-terminal signal peptide occupies residues 1–49 (MAAAALKRMRGPAQAKLLPGSAIQALVGLARPLVLALLLVSAALSSVVS). Topologically, residues 50 to 196 (RTDSPSPTVL…MPSSNIEEED (147 aa)) are extracellular. Polar residues predominate over residues 72-96 (THENQTKPSISQISTTLPPTMSTEK). Disordered regions lie at residues 72–123 (THEN…EDPS) and 135–168 (SPST…SDDT). The N-linked (GlcNAc...) asparagine glycan is linked to Asn75. Residues 114-123 (EEADNNEDPS) show a composition bias toward acidic residues. A helical transmembrane segment spans residues 197–217 (SHFFFHLIIFAFCIAVVYITY). At 218–265 (HNKRKIFLLVQSRKWRDGLCSKTVEYHRLDQNVNEAMPSLKITNDYTF) the chain is on the cytoplasmic side. Ser229 and Ser256 each carry phosphoserine.

The protein localises to the membrane. The protein is Keratinocyte-associated transmembrane protein 2 (KCT2) of Pongo abelii (Sumatran orangutan).